Here is a 35-residue protein sequence, read N- to C-terminus: Beta/delta-theraphotoxin-Pre1a (35 aa).

Intrachain disulfides connect Cys3-Cys18, Cys10-Cys23, and Cys17-Cys30.

It belongs to the neurotoxin 10 (Hwtx-1) family. As to expression, expressed by the venom gland.

It localises to the secreted. Functionally, gating-modifier toxin that both inhibits the peak current of human Nav1.1/SCN1A, rat Nav1.2/SCN2A, human Nav1.6/SCN8A, and human Nav1.7/SCN9A and concurrently inhibits fast inactivation of human Nav1.1 and rat Nav1.3/SCN3A. The relative rank order potency for Nav modulation is Nav1.3 (inactivation EC(50)=45 nM) &gt; Nav1.7 &gt; Nav1.2 &gt; Nav1.1 (inactivation) &gt; Nav1.1 &gt; Nav1.6 &gt; Nav1.3 (IC(50)=8 uM). The DII and DIV S3-S4 loops of Nav channel voltage sensors are important for the interaction of this toxin with Nav channels but cannot account for its unique subtype selectivity. It is the variability of the S1-S2 loops between NaV channels which contributes substantially to the selectivity profile observed for this toxin, particularly with regards to fast inactivation. This toxin may bind the channel in the resting state. The protein is Beta/delta-theraphotoxin-Pre1a of Psalmopoeus reduncus (Costa Rican orangemouth tarantula).